The primary structure comprises 892 residues: DNA mismatch repair protein MutS (892 aa).

607 to 614 (GPNMSGKS) contacts ATP.

The protein belongs to the DNA mismatch repair MutS family.

Its function is as follows. This protein is involved in the repair of mismatches in DNA. It is possible that it carries out the mismatch recognition step. This protein has a weak ATPase activity. The polypeptide is DNA mismatch repair protein MutS (Bacillus cereus (strain G9842)).